Here is a 66-residue protein sequence, read N- to C-terminus: Large ribosomal subunit protein bL31 (66 aa).

4 residues coordinate Zn(2+): C16, C18, C36, and C39.

The protein belongs to the bacterial ribosomal protein bL31 family. Type A subfamily. As to quaternary structure, part of the 50S ribosomal subunit. Zn(2+) serves as cofactor.

Binds the 23S rRNA. The chain is Large ribosomal subunit protein bL31 from Trichlorobacter lovleyi (strain ATCC BAA-1151 / DSM 17278 / SZ) (Geobacter lovleyi).